We begin with the raw amino-acid sequence, 316 residues long: 4-diphosphocytidyl-2-C-methyl-D-erythritol kinase (316 aa).

Residue lysine 32 is part of the active site. 126-136 (PVGAGLGGGSA) contributes to the ATP binding site. Aspartate 168 is an active-site residue.

Belongs to the GHMP kinase family. IspE subfamily.

It catalyses the reaction 4-CDP-2-C-methyl-D-erythritol + ATP = 4-CDP-2-C-methyl-D-erythritol 2-phosphate + ADP + H(+). The protein operates within isoprenoid biosynthesis; isopentenyl diphosphate biosynthesis via DXP pathway; isopentenyl diphosphate from 1-deoxy-D-xylulose 5-phosphate: step 3/6. Catalyzes the phosphorylation of the position 2 hydroxy group of 4-diphosphocytidyl-2C-methyl-D-erythritol. This is 4-diphosphocytidyl-2-C-methyl-D-erythritol kinase from Bifidobacterium longum (strain DJO10A).